Here is a 467-residue protein sequence, read N- to C-terminus: Metal transporter cnnm-4 (467 aa).

The Extracellular portion of the chain corresponds to 1 to 110 (MELYAAGRYD…EIPEGKDKTR (110 aa)). Asn-61 carries N-linked (GlcNAc...) asparagine glycosylation. Residues 107-293 (DKTRVYFMMP…LEDEEAADGN (187 aa)) enclose the CNNM transmembrane domain. Residues 111 to 131 (VYFMMPLLVLCLGLSATFSGL) form a helical membrane-spanning segment. Topologically, residues 132 to 170 (NLAIMSFSINDLKLIQESDSDKLMKQRAMDVMRLRRNSN) are cytoplasmic. Residues 171 to 191 (FVLVTIIFGNCFCNISITLLM) form a helical membrane-spanning segment. At 192-196 (NYFAE) the chain is on the extracellular side. A helical transmembrane segment spans residues 197-217 (FYGFGGFIFVELISTALLLIF). Over 218–238 (TEILPSLIFTKNALAIASRLQ) the chain is Cytoplasmic. A helical transmembrane segment spans residues 239–259 (YFVIFTMCITSPISYPLAMLL). Residues 260 to 467 (NIILGKENAD…IFDEKDARQE (208 aa)) lie on the Extracellular side of the membrane. 2 consecutive CBS domains span residues 317–381 (MTEI…GSDT) and 394–461 (KRRK…IFDE). Residue Asn-364 is glycosylated (N-linked (GlcNAc...) asparagine).

This sequence belongs to the ACDP family.

It is found in the cell membrane. In terms of biological role, probable metal transporter. Probably acts redundantly with the other metal transport proteins cnnm-1, cnnm-2, cnnm-3 and cnnm-5 to regulate Mg(2+) homeostasis. In Caenorhabditis elegans, this protein is Metal transporter cnnm-4.